Consider the following 375-residue polypeptide: Flagellin (375 aa).

It belongs to the bacterial flagellin family.

It is found in the secreted. It localises to the bacterial flagellum. Its function is as follows. Flagellin is the subunit protein which polymerizes to form the filaments of bacterial flagella. Flagella are an important component in the invasiveness of B.bacilliformis. This is Flagellin from Bartonella bacilliformis.